The sequence spans 514 residues: Anthranilate synthase component 1 (514 aa).

Residues Thr40 and 291 to 293 (PYM) contribute to the L-tryptophan site. 328 to 329 (GT) serves as a coordination point for chorismate. Residue Glu361 participates in Mg(2+) binding. Chorismate is bound by residues Tyr449, Arg469, 482 to 484 (GAG), and Gly484. A Mg(2+)-binding site is contributed by Glu497.

This sequence belongs to the anthranilate synthase component I family. As to quaternary structure, heterotetramer consisting of two non-identical subunits: a beta subunit (TrpG) and a large alpha subunit (TrpE). Mg(2+) is required as a cofactor.

The catalysed reaction is chorismate + L-glutamine = anthranilate + pyruvate + L-glutamate + H(+). Its pathway is amino-acid biosynthesis; L-tryptophan biosynthesis; L-tryptophan from chorismate: step 1/5. Its activity is regulated as follows. Feedback inhibited by tryptophan. Functionally, part of a heterotetrameric complex that catalyzes the two-step biosynthesis of anthranilate, an intermediate in the biosynthesis of L-tryptophan. In the first step, the glutamine-binding beta subunit (TrpG) of anthranilate synthase (AS) provides the glutamine amidotransferase activity which generates ammonia as a substrate that, along with chorismate, is used in the second step, catalyzed by the large alpha subunit of AS (TrpE) to produce anthranilate. In the absence of TrpG, TrpE can synthesize anthranilate directly from chorismate and high concentrations of ammonia. The protein is Anthranilate synthase component 1 (trpE) of Buchnera aphidicola subsp. Rhopalosiphum maidis.